A 311-amino-acid chain; its full sequence is Ceroid-lipofuscinosis neuronal protein 6 (311 aa).

Transmembrane regions (helical) follow at residues Trp-56–Leu-76, Val-81–Ile-101, Ser-111–Asp-131, Cys-179–Ala-199, Ser-204–Leu-224, Val-225–Val-245, and Leu-260–Leu-280.

As to quaternary structure, interacts with CRMP2. Interacts with CLN5. Interacts with CLN3.

It is found in the endoplasmic reticulum membrane. Its subcellular location is the endoplasmic reticulum. In Homo sapiens (Human), this protein is Ceroid-lipofuscinosis neuronal protein 6 (CLN6).